We begin with the raw amino-acid sequence, 799 residues long: Histidine biosynthesis trifunctional protein (799 aa).

Residues 1–229 (MVLPILPLID…FIVEQENVGF (229 aa)) are phosphoribosyl-AMP cyclohydrolase. Residues 230–312 (CHLETMSCFG…FYFALAKLVT (83 aa)) are phosphoribosyl-ATP pyrophosphohydrolase. Positions 313–799 (NNVSLKDVEN…KLGLIPKDFQ (487 aa)) are histidinol dehydrogenase. Zn(2+) contacts are provided by glutamine 618 and histidine 621. Residues glutamate 687 and histidine 688 contribute to the active site. Residues aspartate 721 and histidine 780 each contribute to the Zn(2+) site.

This sequence in the C-terminal section; belongs to the histidinol dehydrogenase family. The cofactor is Zn(2+).

It carries out the reaction 1-(5-phospho-beta-D-ribosyl)-5'-AMP + H2O = 1-(5-phospho-beta-D-ribosyl)-5-[(5-phospho-beta-D-ribosylamino)methylideneamino]imidazole-4-carboxamide. The catalysed reaction is 1-(5-phospho-beta-D-ribosyl)-ATP + H2O = 1-(5-phospho-beta-D-ribosyl)-5'-AMP + diphosphate + H(+). The enzyme catalyses L-histidinol + 2 NAD(+) + H2O = L-histidine + 2 NADH + 3 H(+). The protein operates within amino-acid biosynthesis; L-histidine biosynthesis; L-histidine from 5-phospho-alpha-D-ribose 1-diphosphate: step 2/9. It participates in amino-acid biosynthesis; L-histidine biosynthesis; L-histidine from 5-phospho-alpha-D-ribose 1-diphosphate: step 3/9. It functions in the pathway amino-acid biosynthesis; L-histidine biosynthesis; L-histidine from 5-phospho-alpha-D-ribose 1-diphosphate: step 9/9. The sequence is that of Histidine biosynthesis trifunctional protein (HIS4) from Saccharomyces bayanus (Yeast).